The following is a 402-amino-acid chain: NADH-quinone oxidoreductase subunit D (402 aa).

This sequence belongs to the complex I 49 kDa subunit family. As to quaternary structure, NDH-1 is composed of 14 different subunits. Subunits NuoB, C, D, E, F, and G constitute the peripheral sector of the complex.

Its subcellular location is the cell inner membrane. The catalysed reaction is a quinone + NADH + 5 H(+)(in) = a quinol + NAD(+) + 4 H(+)(out). Its function is as follows. NDH-1 shuttles electrons from NADH, via FMN and iron-sulfur (Fe-S) centers, to quinones in the respiratory chain. The immediate electron acceptor for the enzyme in this species is believed to be ubiquinone. Couples the redox reaction to proton translocation (for every two electrons transferred, four hydrogen ions are translocated across the cytoplasmic membrane), and thus conserves the redox energy in a proton gradient. The polypeptide is NADH-quinone oxidoreductase subunit D (Protochlamydia amoebophila (strain UWE25)).